Consider the following 121-residue polypeptide: NADH-quinone oxidoreductase subunit A 1 (121 aa).

3 consecutive transmembrane segments (helical) span residues 6 to 26 (FPIF…LSIG), 62 to 82 (LVAM…PWAV), and 90 to 110 (FYGL…YYYI).

Belongs to the complex I subunit 3 family. In terms of assembly, NDH-1 is composed of 14 different subunits. Subunits NuoA, H, J, K, L, M, N constitute the membrane sector of the complex.

It localises to the cell inner membrane. It carries out the reaction a quinone + NADH + 5 H(+)(in) = a quinol + NAD(+) + 4 H(+)(out). NDH-1 shuttles electrons from NADH, via FMN and iron-sulfur (Fe-S) centers, to quinones in the respiratory chain. The immediate electron acceptor for the enzyme in this species is believed to be a menaquinone. Couples the redox reaction to proton translocation (for every two electrons transferred, four hydrogen ions are translocated across the cytoplasmic membrane), and thus conserves the redox energy in a proton gradient. This chain is NADH-quinone oxidoreductase subunit A 1, found in Chloroherpeton thalassium (strain ATCC 35110 / GB-78).